We begin with the raw amino-acid sequence, 660 residues long: MTTIIELPEVLANQIAAGEVIERPASVVKELVENAIDAKSSQITVEIEESGLKMIQITDNGEGMSHEDLPLSLRRHATSKIKSQSDLFRIRTLGFRGEALPSVASISKLTIKTATAEAEHGSILVASGGKIEQLEAVSTPVGTKIKVENLFYNTPARLKYMKSLQAELAHVVDVVNRLSLAHPEIAFTLISDGKQLTQTSGTGDLRQALAGIYGLNTAKKMIDISSADLDFEVGGFVSLPELTRANRNYITILINGRYIKNFLLNRAILDGYGSKLMVGRFPIAVIDIQIDPYLADVNVHPTKQEIRISKERELMALISTAISESLREQDLIPDALENLARSSTRSFSKPEQTSLPLQPSQLYYDPQKNDFFTKETVVSEDSPQGFNHEVLIDSDVKQVDNLQVTKTESEAAAPSVKYASRPDPMLSDGEHPGLDVHNKQKLSQMLDRLENEEQSVFPELDYFGQMHGTYLFAQGRDGLFIIDQHAAQERVKYEYYRDKIGEVDNSLQQLLVPYLFEFSGSDFINLQEKMSLLNEVGIYLEPYGNHTFILREHPIWMKETEIESGVYEMCDMLLLTNEVSIKTYRAELAIMMSCKHSIKANHSLDDYSARQLLLQLAQCKNPYNCPHGRPVLINFSKADMEKMFRRIQENHTSLRELGKY.

This sequence belongs to the DNA mismatch repair MutL/HexB family.

Its function is as follows. This protein is involved in the repair of mismatches in DNA. It is required for dam-dependent methyl-directed DNA mismatch repair. May act as a 'molecular matchmaker', a protein that promotes the formation of a stable complex between two or more DNA-binding proteins in an ATP-dependent manner without itself being part of a final effector complex. The protein is DNA mismatch repair protein MutL of Streptococcus equi subsp. zooepidemicus (strain H70).